Here is a 1752-residue protein sequence, read N- to C-terminus: GESGSGKTTIRSHLLSAFLSFSSTPLSSKLSYAAFLFDTLTTTKSLTTQTASKAGLFLELQYDGSSSVNPTLIGGKIIDHRLERSRITSVPTGERSFHVLYYLLAGTSPAEKAHLGFDKAVHVSTSSGAIGHKRWRYLGHPTQLKVGVNDVEGFQHFKTALRKLEFPRSEIAEICQILATILHIGQLEFASGQATTTHAEESGGYSHEGGETVTIVKNKDVLSIIAAFLGLSVEDLENSFGYRTKTIHRERVTVMLDPKGARQNADELARTIYSLLVAYVIEAVNQRICAAEDSVANTISIVDFPGFAQACATGSTLDQLFNNAATELLYNFCLQSFFDRKADELEREEVSVPATSYFDNTDAVRGLLKHGNGLLSILDDQTRRGRTDNQLLESLRRRFENKNPTIIVEGSKRTSLISQNARSAFTVKHFAGEIDYSVNGLIEENGEFISGDLMRLMKSTKSDFVRELFGQAALQTVTHPKEKTAIMQAQVSSKPLRMPSMARRKTSPSSRLAFDAGDADEVESQAESIAKDSSSGRRKSAMLTSGIQGAAGQFLSSLDIVNKCLSSTNLNPYFIFCLKPNDRRIANQFDSKCVRAQVQMFGIAEISQRLRNADFSVFLPFAEFLGLAEIGNIVVVGSDKEKAEVVLDEKRWPGNEARVGSTGVFLSERCWADLAKVGERVVPVYAADMSDEGGDGLLHPRSTGYGDSKVRLLNPADQSPGAFIYGDEAKQGYFGSRDLDGRSDAGNSAFNSGDMFRNHETREQMLEKGNEKKMEEVDDAPISGSRKRWIALVYLLTFYIPDFAIKLFGRIKRKDVRMAWREKFAINLIIWFSCGVAIFFIVAFPGLVCPTQHVYSAAELSSHNGKDGHSSFIAIRGVVFDLDKFMPGHYPHIVPESALKKYAGVDATGLFPVQVSALCQGKSGSVDPTVLLDYRPTNISGSATTISGTDTNSVYHDFRHFTNDSRPDWFYEQMVMLKANYLKGYVGYTPKYLNTLGKKSQSIGSINGKVYDLTSYIAGGRLTKAPPGETVPSDVDTDFMDNSVVSLFQSLPGQDLSKHWENLKIDALRRRMQLCLDNLFFVGHVDTRNSAQCEFARYFILAISVLICSIIVFKFLAALQFGRKNVPENLDKFIICQVPAYTEDEESLRRAIDSMARMRYDDKRKLLVVICDGMIIGQGNDRPTPRIVLDILGVPESVDPEPLSFESLGEGQKQHNMGKVYSGLYEVQGHIVPFLVIVKVGKPSEVSRPGNRGKRDSQMVLMKIPERVHYNLPMSPMELEMHHQIRNVIGVNPTFYEFILQVDADTVVAPDSATRMVAAFLNDTRLIGVCGETALTNAKTSAVTMIQVYEYYISHNLTKAFESLFGSVTCLPGCFTMYRIRSAETAKPLFVSKEVVDAYAEIRVDTLHMKNLLHLGEDRYLTTLLLKHHSKYKTKYISSAKAWTIAPESWTVFLSQRRRWINSTVHNLIELIPMQQLCGFCCFSMRFVVFVDLLSTVIQPVTLAYIIYLIYWLVKDTSTIPYTSLILLAAIYGLQALIFIIRRKWEMVGWMIVYLLALPVFSLPCPSTLSGTWTTLPGVTHVSSQERKAGKVVISDEGKFDPASIPKKKWEEYQTELWEAQTSRDDRSEVSGISYGTKSYHPAQSEYGFPGSRPMSQLDLPRFGSRMSLAPSEMMSRHADMEMENLSHLPSDDAILAEIREILRTADLMSVTKKSIKLELERAFGVNLDLKRPYINSGKGYTFPFPVLRTVC.

Residue 1 to 8 (GESGSGKT) coordinates ATP. The tract at residues 492 to 520 (SSKPLRMPSMARRKTSPSSRLAFDAGDAD) is disordered. The segment at 558–582 (LDIVNKCLSSTNLNPYFIFCLKPND) is actin-binding. The next 2 helical transmembrane spans lie at 789–809 (WIAL…KLFG) and 828–848 (LIIW…PGLV). Residues 852-940 (QHVYSAAELS…LLDYRPTNIS (89 aa)) form the Cytochrome b5 heme-binding domain. N-linked (GlcNAc...) asparagine glycans are attached at residues asparagine 938 and asparagine 963. The helical transmembrane segment at 1099 to 1119 (FILAISVLICSIIVFKFLAAL) threads the bilayer. N-linked (GlcNAc...) asparagine glycans are attached at residues asparagine 1322, asparagine 1356, and asparagine 1462. 3 consecutive transmembrane segments (helical) span residues 1494–1514 (LSTV…YWLV), 1520–1540 (IPYT…LIFI), and 1547–1567 (MVGW…PCPS). An N-linked (GlcNAc...) asparagine glycan is attached at asparagine 1685. Residues 1689 to 1744 (LPSDDAILAEIREILRTADLMSVTKKSIKLELERAFGVNLDLKRPYINSGKGYTFP) form the DEK-C domain.

This sequence in the N-terminal section; belongs to the TRAFAC class myosin-kinesin ATPase superfamily. Myosin family. The protein in the C-terminal section; belongs to the chitin synthase family. Class V subfamily.

It is found in the cell membrane. The protein resides in the cell septum. It localises to the cell tip. It catalyses the reaction [(1-&gt;4)-N-acetyl-beta-D-glucosaminyl](n) + UDP-N-acetyl-alpha-D-glucosamine = [(1-&gt;4)-N-acetyl-beta-D-glucosaminyl](n+1) + UDP + H(+). Polymerizes chitin, a structural polymer of the cell wall and septum, by transferring the sugar moiety of UDP-GlcNAc to the non-reducing end of the growing chitin polymer. Important for hyphal growth and conidiophore development but not pathogenicity. The chain is Chitin synthase E from Aspergillus fumigatus (Neosartorya fumigata).